Consider the following 301-residue polypeptide: GTPase Era (301 aa).

Residues 7–175 form the Era-type G domain; that stretch reads YCGFVAIVGR…AAIVRKHLPE (169 aa). The G1 stretch occupies residues 15-22; sequence GRPNVGKS. Residue 15 to 22 coordinates GTP; sequence GRPNVGKS. A G2 region spans residues 41 to 45; it reads QTTRH. Residues 62–65 are G3; it reads DTPG. GTP is bound by residues 62-66 and 124-127; these read DTPGL and NKVD. The segment at 124–127 is G4; that stretch reads NKVD. The interval 154 to 156 is G5; the sequence is ISA. Positions 206 to 283 constitute a KH type-2 domain; that stretch reads LGAELPYSVT…HLELWVKVKS (78 aa).

The protein belongs to the TRAFAC class TrmE-Era-EngA-EngB-Septin-like GTPase superfamily. Era GTPase family. In terms of assembly, monomer.

It is found in the cytoplasm. It localises to the cell inner membrane. Functionally, an essential GTPase that binds both GDP and GTP, with rapid nucleotide exchange. Plays a role in 16S rRNA processing and 30S ribosomal subunit biogenesis and possibly also in cell cycle regulation and energy metabolism. This is GTPase Era from Klebsiella pneumoniae subsp. pneumoniae (strain ATCC 700721 / MGH 78578).